Reading from the N-terminus, the 142-residue chain is Nucleoside diphosphate kinase (142 aa).

Residues lysine 11, phenylalanine 59, arginine 87, threonine 93, arginine 104, and asparagine 114 each coordinate ATP. Histidine 117 serves as the catalytic Pros-phosphohistidine intermediate.

Belongs to the NDK family. As to quaternary structure, homotetramer. Mg(2+) is required as a cofactor.

It localises to the cytoplasm. The enzyme catalyses a 2'-deoxyribonucleoside 5'-diphosphate + ATP = a 2'-deoxyribonucleoside 5'-triphosphate + ADP. It carries out the reaction a ribonucleoside 5'-diphosphate + ATP = a ribonucleoside 5'-triphosphate + ADP. Major role in the synthesis of nucleoside triphosphates other than ATP. The ATP gamma phosphate is transferred to the NDP beta phosphate via a ping-pong mechanism, using a phosphorylated active-site intermediate. In Salinibacter ruber (strain DSM 13855 / M31), this protein is Nucleoside diphosphate kinase.